The chain runs to 113 residues: UPF0122 protein LCA_0713 (113 aa).

Belongs to the UPF0122 family.

Might take part in the signal recognition particle (SRP) pathway. This is inferred from the conservation of its genetic proximity to ftsY/ffh. May be a regulatory protein. This Latilactobacillus sakei subsp. sakei (strain 23K) (Lactobacillus sakei subsp. sakei) protein is UPF0122 protein LCA_0713.